A 147-amino-acid polypeptide reads, in one-letter code: Hemoglobin subunit beta (147 aa).

V2 carries the post-translational modification N-acetylvaline. A Globin domain is found at 3–147 (HLTGEEKSAV…VANALAHKYH (145 aa)). T13 bears the Phosphothreonine mark. S45 is modified (phosphoserine). Residue K60 is modified to N6-acetyllysine. H64 is a heme b binding site. An N6-acetyllysine modification is found at K83. H93 is a heme b binding site. C94 is modified (S-nitrosocysteine). K145 is modified (N6-acetyllysine).

It belongs to the globin family. Heterotetramer of two alpha chains and two beta chains. As to expression, red blood cells.

Its function is as follows. Involved in oxygen transport from the lung to the various peripheral tissues. The sequence is that of Hemoglobin subunit beta (HBB) from Callithrix jacchus (White-tufted-ear marmoset).